The sequence spans 126 residues: Adenosine 5'-monophosphoramidase HINT1 (126 aa).

An N-acetylalanine modification is found at Ala-2. One can recognise an HIT domain in the interval 18–126; it reads IFGKIIRKEI…GGRQMNWPPG (109 aa). N6-acetyllysine occurs at positions 21 and 30. 43 to 44 serves as a coordination point for AMP; that stretch reads DI. Ser-45 and Ser-72 each carry phosphoserine. AMP is bound by residues Asn-99, 105–107, and 112–114; these read GQS and HLH. Residues 110–114 carry the Histidine triad motif motif; that stretch reads HVHLH. His-112 (tele-AMP-histidine intermediate) is an active-site residue.

Belongs to the HINT family. As to quaternary structure, homodimer. Interacts with CDK7. Interacts with RUVBL1 and RUVBL2 and is associated with the LEF1/TCF1-CTNNB1 complex and with a KAT5 histone acetyltransferase complex. Identified in a complex with MITF and CTNNB1. Interacts with CDC34 and RBX1, and is part of a SCF (SKP2-CUL1-F-box protein) E3 ubiquitin-protein ligase complex. Interacts with SUMO1, SUMO2 and RGS17. Interacts with the Ten-1 ICD form of TENM1. Interacts with CALM1; interaction increases in the presence of calcium ions. Widely expressed.

Its subcellular location is the cytoplasm. The protein resides in the nucleus. It catalyses the reaction adenosine 5'-phosphoramidate + H2O = AMP + NH4(+). Its function is as follows. Exhibits adenosine 5'-monophosphoramidase activity, hydrolyzing purine nucleotide phosphoramidates with a single phosphate group such as adenosine 5'monophosphoramidate (AMP-NH2) to yield AMP and NH2. Hydrolyzes adenosine 5'monophosphomorpholidate (AMP-morpholidate) and guanosine 5'monophosphomorpholidate (GMP-morpholidate). Hydrolyzes lysyl-AMP (AMP-N-epsilon-(N-alpha-acetyl lysine methyl ester)) generated by lysine tRNA ligase, as well as Met-AMP, His-AMP and Asp-AMP, lysyl-GMP (GMP-N-epsilon-(N-alpha-acetyl lysine methyl ester)) and AMP-N-alanine methyl ester. Can also convert adenosine 5'-O-phosphorothioate and guanosine 5'-O-phosphorothioate to the corresponding nucleoside 5'-O-phosphates with concomitant release of hydrogen sulfide. In addition, functions as a scaffolding protein that modulates transcriptional activation by the LEF1/TCF1-CTNNB1 complex and by the complex formed with MITF and CTNNB1. Modulates p53/TP53 levels and p53/TP53-mediated apoptosis. Modulates proteasomal degradation of target proteins by the SCF (SKP2-CUL1-F-box protein) E3 ubiquitin-protein ligase complex. Also exhibits SUMO-specific isopeptidase activity, deconjugating SUMO1 from RANGAP1 and RGS17. This Bos taurus (Bovine) protein is Adenosine 5'-monophosphoramidase HINT1 (HINT1).